The sequence spans 83 residues: Antitoxin ChpS (83 aa).

One can recognise a SpoVT-AbrB domain in the interval Ile3–Arg48.

It belongs to the PemI family. As to quaternary structure, interacts with ChpB, inhibiting its endoribonuclease activity.

Functionally, antitoxin component of a type II toxin-antitoxin (TA) system. May be involved in the regulation of cell growth. It acts as a suppressor of the endoribonuclease (inhibitory function) of ChpB protein. Both ChpS and ChpB probably bind to the promoter region of the chpS-chpB operon to autoregulate their synthesis. This Escherichia coli (strain K12) protein is Antitoxin ChpS (chpS).